Here is a 391-residue protein sequence, read N- to C-terminus: uncharacterized protein (391 aa).

A signal peptide spans Met-1–Gly-20. A lipid anchor (S-archaeol cysteine) is attached at Cys-21. The 274-residue stretch at Arg-104–Leu-377 folds into the Fe/B12 periplasmic-binding domain.

Its subcellular location is the cell membrane. This is an uncharacterized protein from Methanocaldococcus jannaschii (strain ATCC 43067 / DSM 2661 / JAL-1 / JCM 10045 / NBRC 100440) (Methanococcus jannaschii).